The following is a 347-amino-acid chain: Selenide, water dikinase (347 aa).

C17 is an active-site residue. ATP-binding positions include K20 and 48–50 (TRD). D51 lines the Mg(2+) pocket. Residues D68, D91, and 139–141 (GHS) each bind ATP. A Mg(2+)-binding site is contributed by D91. Position 227 (D227) interacts with Mg(2+).

Belongs to the selenophosphate synthase 1 family. Class I subfamily. Homodimer. Mg(2+) serves as cofactor.

It catalyses the reaction hydrogenselenide + ATP + H2O = selenophosphate + AMP + phosphate + 2 H(+). Functionally, synthesizes selenophosphate from selenide and ATP. The chain is Selenide, water dikinase from Escherichia coli O9:H4 (strain HS).